Here is an 89-residue protein sequence, read N- to C-terminus: Small ribosomal subunit protein uS14 (89 aa).

The protein belongs to the universal ribosomal protein uS14 family. As to quaternary structure, part of the 30S ribosomal subunit. Contacts proteins S3 and S10.

Its function is as follows. Binds 16S rRNA, required for the assembly of 30S particles and may also be responsible for determining the conformation of the 16S rRNA at the A site. This Streptococcus pneumoniae serotype 2 (strain D39 / NCTC 7466) protein is Small ribosomal subunit protein uS14.